The following is a 420-amino-acid chain: Gamma-glutamyl phosphate reductase (420 aa).

The protein belongs to the gamma-glutamyl phosphate reductase family.

The protein resides in the cytoplasm. The catalysed reaction is L-glutamate 5-semialdehyde + phosphate + NADP(+) = L-glutamyl 5-phosphate + NADPH + H(+). It participates in amino-acid biosynthesis; L-proline biosynthesis; L-glutamate 5-semialdehyde from L-glutamate: step 2/2. Its function is as follows. Catalyzes the NADPH-dependent reduction of L-glutamate 5-phosphate into L-glutamate 5-semialdehyde and phosphate. The product spontaneously undergoes cyclization to form 1-pyrroline-5-carboxylate. The sequence is that of Gamma-glutamyl phosphate reductase from Chlorobaculum parvum (strain DSM 263 / NCIMB 8327) (Chlorobium vibrioforme subsp. thiosulfatophilum).